Here is a 189-residue protein sequence, read N- to C-terminus: Interferon alpha-6 (189 aa).

The N-terminal stretch at 1-23 is a signal peptide; the sequence is MARLCAFLMVLAVLSYWPTCSLG. 2 disulfide bridges follow: Cys24–Cys122 and Cys52–Cys162. N-linked (GlcNAc...) asparagine glycosylation occurs at Asn101.

This sequence belongs to the alpha/beta interferon family.

It is found in the secreted. Functionally, produced by macrophages, IFN-alpha have antiviral activities. Interferon stimulates the production of two enzymes: a protein kinase and an oligoadenylate synthetase. This is Interferon alpha-6 (Ifna6) from Mus musculus (Mouse).